The following is a 37-amino-acid chain: Cytochrome b6-f complex subunit 5 (37 aa).

The chain crosses the membrane as a helical span at residues 5–25 (LLFGIVLGLIPVTLTGLFVAA).

Belongs to the PetG family. In terms of assembly, the 4 large subunits of the cytochrome b6-f complex are cytochrome b6, subunit IV (17 kDa polypeptide, PetD), cytochrome f and the Rieske protein, while the 4 small subunits are PetG, PetL, PetM and PetN. The complex functions as a dimer.

It localises to the plastid. It is found in the chloroplast thylakoid membrane. Its function is as follows. Component of the cytochrome b6-f complex, which mediates electron transfer between photosystem II (PSII) and photosystem I (PSI), cyclic electron flow around PSI, and state transitions. PetG is required for either the stability or assembly of the cytochrome b6-f complex. This is Cytochrome b6-f complex subunit 5 from Guillardia theta (Cryptophyte).